The following is a 298-amino-acid chain: Serine/threonine-protein kinase 1 (298 aa).

The region spanning 38–276 is the Protein kinase domain; that stretch reads FIATRPMFEG…FKSLVSHPWF (239 aa). ATP-binding positions include 45–53 and K65; that span reads FEGGRNNVF. D152 (proton acceptor) is an active-site residue.

The protein belongs to the protein kinase superfamily. Ser/Thr protein kinase family.

Its subcellular location is the virion. The protein localises to the host cytoplasm. The enzyme catalyses L-seryl-[protein] + ATP = O-phospho-L-seryl-[protein] + ADP + H(+). It carries out the reaction L-threonyl-[protein] + ATP = O-phospho-L-threonyl-[protein] + ADP + H(+). Its function is as follows. Essential for viral replication. It may mediate the virus' progression through DNA replication. This Ornithodoros (relapsing fever ticks) protein is Serine/threonine-protein kinase 1.